A 331-amino-acid chain; its full sequence is Ketol-acid reductoisomerase (NADP(+)) (331 aa).

The 181-residue stretch at 2–182 folds into the KARI N-terminal Rossmann domain; the sequence is ARLYYDADAN…GGTRAGILET (181 aa). NADP(+)-binding positions include 25–28, Ser51, Ser53, and 83–86; these read YGSQ and DEVQ. Residue His108 is part of the active site. Gly134 serves as a coordination point for NADP(+). In terms of domain architecture, KARI C-terminal knotted spans 183–328; that stretch reads TFREETETDL…KDLRAMFSWL (146 aa). Positions 191, 195, 227, and 231 each coordinate Mg(2+). Substrate is bound at residue Ser252.

The protein belongs to the ketol-acid reductoisomerase family. Mg(2+) is required as a cofactor.

The catalysed reaction is (2R)-2,3-dihydroxy-3-methylbutanoate + NADP(+) = (2S)-2-acetolactate + NADPH + H(+). It catalyses the reaction (2R,3R)-2,3-dihydroxy-3-methylpentanoate + NADP(+) = (S)-2-ethyl-2-hydroxy-3-oxobutanoate + NADPH + H(+). The protein operates within amino-acid biosynthesis; L-isoleucine biosynthesis; L-isoleucine from 2-oxobutanoate: step 2/4. It functions in the pathway amino-acid biosynthesis; L-valine biosynthesis; L-valine from pyruvate: step 2/4. Its function is as follows. Involved in the biosynthesis of branched-chain amino acids (BCAA). Catalyzes an alkyl-migration followed by a ketol-acid reduction of (S)-2-acetolactate (S2AL) to yield (R)-2,3-dihydroxy-isovalerate. In the isomerase reaction, S2AL is rearranged via a Mg-dependent methyl migration to produce 3-hydroxy-3-methyl-2-ketobutyrate (HMKB). In the reductase reaction, this 2-ketoacid undergoes a metal-dependent reduction by NADPH to yield (R)-2,3-dihydroxy-isovalerate. This Cyanothece sp. (strain PCC 7425 / ATCC 29141) protein is Ketol-acid reductoisomerase (NADP(+)).